The sequence spans 253 residues: Ubiquinone biosynthesis O-methyltransferase (253 aa).

Residues Arg47, Gly78, Asp99, and Met141 each contribute to the S-adenosyl-L-methionine site.

It belongs to the methyltransferase superfamily. UbiG/COQ3 family.

It carries out the reaction a 3-demethylubiquinol + S-adenosyl-L-methionine = a ubiquinol + S-adenosyl-L-homocysteine + H(+). The enzyme catalyses a 3-(all-trans-polyprenyl)benzene-1,2-diol + S-adenosyl-L-methionine = a 2-methoxy-6-(all-trans-polyprenyl)phenol + S-adenosyl-L-homocysteine + H(+). It functions in the pathway cofactor biosynthesis; ubiquinone biosynthesis. Its function is as follows. O-methyltransferase that catalyzes the 2 O-methylation steps in the ubiquinone biosynthetic pathway. The protein is Ubiquinone biosynthesis O-methyltransferase of Rhodopseudomonas palustris (strain BisA53).